Consider the following 825-residue polypeptide: Endoglucanase C (825 aa).

The signal sequence occupies residues 1-28 (MRNKLRRLLAIMMAVLLITSLFAPMVSA). The active-site Proton donor is the E219. E335 functions as the Nucleophile in the catalytic mechanism. The segment covering 607–621 (DRESVPEPVEHDTKG) has biased composition (basic and acidic residues). Positions 607-635 (DRESVPEPVEHDTKGDSALPSDFEDGTRQ) are disordered.

The protein belongs to the glycosyl hydrolase 5 (cellulase A) family.

It carries out the reaction Endohydrolysis of (1-&gt;4)-beta-D-glucosidic linkages in cellulose, lichenin and cereal beta-D-glucans.. This Evansella cellulosilytica (strain ATCC 21833 / DSM 2522 / FERM P-1141 / JCM 9156 / N-4) (Bacillus cellulosilyticus) protein is Endoglucanase C (celC).